The sequence spans 275 residues: MRLEGEVALVTGGGAGLGRAIVDRYVAEGARVAVLDKSAAGLEALRKLHGDAIVGVEGDVRSLDSHREAVARCVEAFGKLDCLVGNAGVWDYLTQLVDIPDDLISEAFEEMFEVNVKGYILAAKAALPALYQSKGSAIFTVSNAGFYPGGGGVLYTAGKHAVIGLIKQLAHEWGPRIRVNGIAPGGILGSDLRGLKSLDLQDKSISTFPLDDMLKSVLPTGRAATAEEYAGAYVFFATRGDTVPLTGSVLNFDGGMGVRGLFEASLGAQLDKHFG.

9-33 (LVTGGGAGLGRAIVDRYVAEGARVA) provides a ligand contact to NAD(+). Ser-142 serves as a coordination point for substrate. Catalysis depends on Tyr-155, which acts as the Proton acceptor.

This sequence belongs to the short-chain dehydrogenases/reductases (SDR) family.

It carries out the reaction (1S,2R)-3-methylcyclohexa-3,5-diene-1,2-diol + NAD(+) = 3-methylcatechol + NADH + H(+). It functions in the pathway xenobiotic degradation; toluene degradation. This is Cis-toluene dihydrodiol dehydrogenase (todD) from Pseudomonas putida (strain ATCC 700007 / DSM 6899 / JCM 31910 / BCRC 17059 / LMG 24140 / F1).